Reading from the N-terminus, the 996-residue chain is Disease resistance protein RGA4 (996 aa).

A structured coiled coil (CC) domain region spans residues 1–176; that stretch reads MEAALLSGFI…PRIHEADLVG (176 aa). Residues 111–138 are a coiled coil; the sequence is NLQLAQQLQRLKRMAAEANQRKQRYTAA. The region spanning 180-462 is the NB-ARC domain; it reads DREELLEQLA…RWLAEGFVEP (283 aa). LRR repeat units follow at residues 481–503, 504–528, 529–549, 577–599, 600–621, 622–644, 698–722, 759–781, 782–804, 805–830, and 851–874; these read RNIIEPINVSNNDKVKTCQTYGM, MREFISHMSISQNFVTFFCDDKFVP, KYVRRLSLHGDTVVNGDNFNG, LRVLDLEKCDDLKDDHLKEICNL, VLLKYLSLGGNISKLPKDIAKL, KDLEALDVRRSKVKIMPVEVFGL, MNKLRKLKIWCTSSAGSTDWTDLRE, PCYLSSLKLHGNFPQLPQFVTSL, RGLKELCLSSTKFTTGLLEALSN, LSYLQYLKLVADELEKFIIKVQGFPR, and LPFLVTLQLLCKDLHGLSDIQIEC.

This sequence belongs to the disease resistance NB-LRR family. Forms homodimer or heterodimer with RGA5 through its coiled coil (CC) domain. In terms of tissue distribution, expressed in leaves.

It is found in the cytoplasm. Disease resistance (R) protein. Resistance proteins guard the plant against pathogens that contain an appropriate avirulence protein via an indirect interaction with this avirulence protein. That triggers a defense system including the hypersensitive response, which restricts the pathogen growth. Contribution of RGA5 is required to recognize the effector avirulence proteins AVR-Pia and AVR1-CO39 from M.oryzae. Acts as a constitutively active cell death inducer that is repressed by RGA5. Immune response triggered by the RGA4-RGA5 -mediated recognition of AVR1-CO39 confers resistance to X.oryzae pathovars. This is Disease resistance protein RGA4 from Oryza sativa subsp. japonica (Rice).